Reading from the N-terminus, the 470-residue chain is UDP-N-acetylmuramate--L-alanine ligase (470 aa).

Residue 118 to 124 participates in ATP binding; sequence GTHGKTT.

It belongs to the MurCDEF family.

Its subcellular location is the cytoplasm. It catalyses the reaction UDP-N-acetyl-alpha-D-muramate + L-alanine + ATP = UDP-N-acetyl-alpha-D-muramoyl-L-alanine + ADP + phosphate + H(+). It functions in the pathway cell wall biogenesis; peptidoglycan biosynthesis. Cell wall formation. The protein is UDP-N-acetylmuramate--L-alanine ligase of Cereibacter sphaeroides (strain KD131 / KCTC 12085) (Rhodobacter sphaeroides).